The primary structure comprises 238 residues: 5-amino-6-(5-phospho-D-ribitylamino)uracil phosphatase YigB (238 aa).

The active-site Nucleophile is the Asp16. Residues Asp16, Asp18, and Asp188 each contribute to the Mg(2+) site. Substrate is bound at residue 16–18 (DLD).

The protein belongs to the HAD-like hydrolase superfamily. It depends on Mg(2+) as a cofactor. Mn(2+) serves as cofactor. Requires Co(2+) as cofactor. The cofactor is Zn(2+).

The enzyme catalyses 5-amino-6-(5-phospho-D-ribitylamino)uracil + H2O = 5-amino-6-(D-ribitylamino)uracil + phosphate. The protein operates within cofactor biosynthesis; riboflavin biosynthesis; 5-amino-6-(D-ribitylamino)uracil from GTP: step 4/4. Functionally, catalyzes the dephosphorylation of 5-amino-6-(5-phospho-D-ribitylamino)uracil, and thus could be involved in the riboflavin biosynthesis pathway. Is also able to dephosphorylate flavin mononucleotide (FMN) and other phosphoric acid esters. YigB is important for the formation of dormant persister cells. The polypeptide is 5-amino-6-(5-phospho-D-ribitylamino)uracil phosphatase YigB (yigB) (Escherichia coli (strain K12)).